The sequence spans 286 residues: Forkhead box protein E3 (286 aa).

The segment at 1 to 62 (MDAHVAFSGF…GRRRRRPLQR (62 aa)) is disordered. The fork-head DNA-binding region spans 64–158 (KPPYSYIALI…DNGSFLRRRK (95 aa)).

The protein localises to the nucleus. In terms of biological role, transcription factor that controls lens epithelial cell growth through regulation of proliferation, apoptosis and cell cycle. During lens development, controls the ratio of the lens fiber cells to the cells of the anterior lens epithelium by regulating the rate of proliferation and differentiation. Controls lens vesicle closure and subsequent separation of the lens vesicle from ectoderm. Controls the expression of DNAJB1 in a pathway that is crucial for the development of the anterior segment of the eye. This Rattus norvegicus (Rat) protein is Forkhead box protein E3 (Foxe3).